A 757-amino-acid chain; its full sequence is MTSGSVFFYILIIGKYFSHGGGQDVKCSLGYFPCGNITKCLPQLLHCNGVDDCGNQADEDNCGDNNGWSLQFDKYFASYYKMTSQYPFEAETPECLVGSVPVQCLCRGLELDCDETNLRAVPSVSSNVTAMSLQWNLIRKLPPDCFKNYHDLQKLYLQNNKITSISIYAFRGLNSLTKLYLSHNRITFLKPGVFEDLHRLEWLIIEDNHLSRISPPTFYGLNSLILLVLMNNVLTRLPDKPLCQHMPRLHWLDLEGNHIHNLRNLTLISCSNLTVLVMGKNKINHLNENTFAPLQKLDELDLGSNKIENLPPLIFKDLKELSQLNLSYNPIQKIQANQFDYLVKLKSLSLEGIEISNIQQRMFRPLMNLSHIYFKKFQYCGYAPHVRSGKPNTDGISSLENLLASIIQRVFVWVVSAVTCFGNVFVICMRPYIRSENKLYAMSIISLCCADCLMGIYLFVIGGFDLKFRGEYNKHAQLWMESTHCQLVGSLAILSTEVSVLLLTFLTLEKYICIVYPFRCVRPGKCRTITVLILIWITGFIVAFIPLSNKEFFKNYYGTNGVCFPLHSEDTESIGAQVYSVAIFLGINLAAFIIIVFSYGSMFYSVHQSAITATEIRNQVKKEMILAKRFFFIVFTDALCWIPIFVVKFLSLLQVEIPGTITSWVVIFILPINSALNPILYTLTTRPFKEMIHRFWYNYRQRKSMDSKGQKTYAPSFIWVEMWPLQEMPPELMKPGLFTYPCEMSLISQSTRLNSYS.

Residues 1–408 are Extracellular-facing; it reads MTSGSVFFYI…LENLLASIIQ (408 aa). Positions 26-63 constitute an LDL-receptor class A domain; that stretch reads KCSLGYFPCGNITKCLPQLLHCNGVDDCGNQADEDNCG. Intrachain disulfides connect cysteine 27-cysteine 40, cysteine 34-cysteine 53, and cysteine 47-cysteine 62. The N-linked (GlcNAc...) asparagine glycan is linked to asparagine 36. The Ca(2+) site is built by leucine 45, asparagine 48, valine 50, aspartate 52, aspartate 58, and glutamate 59. Residues 91 to 127 form the LRRNT domain; that stretch reads ETPECLVGSVPVQCLCRGLELDCDETNLRAVPSVSSN. Asparagine 127 is a glycosylation site (N-linked (GlcNAc...) asparagine). LRR repeat units lie at residues 151-172, 175-196, 199-220, 223-244, 248-269, 272-293, 296-317, 320-341, and 344-365; these read DLQKLYLQNNKITSISIYAFRG, SLTKLYLSHNRITFLKPGVFED, RLEWLIIEDNHLSRISPPTFYG, SLILLVLMNNVLTRLPDKPLCQ, RLHWLDLEGNHIHNLRNLTLIS, NLTVLVMGKNKINHLNENTFAP, KLDELDLGSNKIENLPPLIFKD, ELSQLNLSYNPIQKIQANQFDY, and KLKSLSLEGIEISNIQQRMFRP. N-linked (GlcNAc...) asparagine glycans are attached at residues asparagine 264 and asparagine 272. Asparagine 325 carries an N-linked (GlcNAc...) asparagine glycan. Asparagine 368 carries an N-linked (GlcNAc...) asparagine glycan. Residues 409–429 traverse the membrane as a helical segment; sequence RVFVWVVSAVTCFGNVFVICM. The Cytoplasmic segment spans residues 430-443; the sequence is RPYIRSENKLYAMS. The chain crosses the membrane as a helical span at residues 444 to 464; it reads IISLCCADCLMGIYLFVIGGF. Residues 465-486 are Extracellular-facing; it reads DLKFRGEYNKHAQLWMESTHCQ. Cysteine 485 and cysteine 563 are disulfide-bonded. The chain crosses the membrane as a helical span at residues 487–507; sequence LVGSLAILSTEVSVLLLTFLT. At 508–527 the chain is on the cytoplasmic side; the sequence is LEKYICIVYPFRCVRPGKCR. Residues 528 to 548 form a helical membrane-spanning segment; the sequence is TITVLILIWITGFIVAFIPLS. At 549-577 the chain is on the extracellular side; it reads NKEFFKNYYGTNGVCFPLHSEDTESIGAQ. Residues 578–598 traverse the membrane as a helical segment; the sequence is VYSVAIFLGINLAAFIIIVFS. Residues 599–629 are Cytoplasmic-facing; sequence YGSMFYSVHQSAITATEIRNQVKKEMILAKR. Residues 630-650 form a helical membrane-spanning segment; sequence FFFIVFTDALCWIPIFVVKFL. Residues 651-660 are Extracellular-facing; it reads SLLQVEIPGT. A helical membrane pass occupies residues 661–681; sequence ITSWVVIFILPINSALNPILY. At 682–757 the chain is on the cytoplasmic side; sequence TLTTRPFKEM…SQSTRLNSYS (76 aa).

The protein belongs to the G-protein coupled receptor 1 family. Interacts with C1QTNF8.

The protein resides in the cell membrane. In terms of biological role, receptor for relaxins. The activity of this receptor is mediated by G proteins leading to stimulation of adenylate cyclase and an increase of cAMP. Binding of the ligand may also activate a tyrosine kinase pathway that inhibits the activity of a phosphodiesterase that degrades cAMP. The polypeptide is Relaxin receptor 1 (RXFP1) (Pongo abelii (Sumatran orangutan)).